We begin with the raw amino-acid sequence, 285 residues long: Polyamine aminopropyltransferase (285 aa).

The region spanning 5–241 (DNWYIEHFQP…GWWSVTMASK (237 aa)) is the PABS domain. Position 35 (glutamine 35) interacts with S-methyl-5'-thioadenosine. Spermidine is bound by residues histidine 66 and aspartate 90. S-methyl-5'-thioadenosine contacts are provided by residues aspartate 110 and 141 to 142 (DG). Aspartate 160 acts as the Proton acceptor in catalysis. 160 to 163 (DSTD) is a spermidine binding site. An S-methyl-5'-thioadenosine-binding site is contributed by proline 167.

Belongs to the spermidine/spermine synthase family. In terms of assembly, homodimer or homotetramer.

The protein localises to the cytoplasm. It catalyses the reaction S-adenosyl 3-(methylsulfanyl)propylamine + putrescine = S-methyl-5'-thioadenosine + spermidine + H(+). Its pathway is amine and polyamine biosynthesis; spermidine biosynthesis; spermidine from putrescine: step 1/1. Functionally, catalyzes the irreversible transfer of a propylamine group from the amino donor S-adenosylmethioninamine (decarboxy-AdoMet) to putrescine (1,4-diaminobutane) to yield spermidine. The sequence is that of Polyamine aminopropyltransferase from Xanthomonas campestris pv. campestris (strain 8004).